The primary structure comprises 458 residues: tRNA modification GTPase MnmE (458 aa).

Residues Arg23, Glu87, and Arg126 each contribute to the (6S)-5-formyl-5,6,7,8-tetrahydrofolate site. The TrmE-type G domain occupies 224–380; that stretch reads GLSMVIVGKP…LKSKIKDLFF (157 aa). Asn234 serves as a coordination point for K(+). GTP is bound by residues 234 to 239, 253 to 259, and 278 to 281; these read NVGKSS, TDIAGTT, and DTAG. Ser238 lines the Mg(2+) pocket. K(+) is bound by residues Thr253, Ile255, and Thr258. Thr259 lines the Mg(2+) pocket. Lys458 provides a ligand contact to (6S)-5-formyl-5,6,7,8-tetrahydrofolate.

It belongs to the TRAFAC class TrmE-Era-EngA-EngB-Septin-like GTPase superfamily. TrmE GTPase family. Homodimer. Heterotetramer of two MnmE and two MnmG subunits. K(+) serves as cofactor.

It localises to the cytoplasm. Its function is as follows. Exhibits a very high intrinsic GTPase hydrolysis rate. Involved in the addition of a carboxymethylaminomethyl (cmnm) group at the wobble position (U34) of certain tRNAs, forming tRNA-cmnm(5)s(2)U34. This is tRNA modification GTPase MnmE from Clostridium perfringens (strain ATCC 13124 / DSM 756 / JCM 1290 / NCIMB 6125 / NCTC 8237 / Type A).